The sequence spans 531 residues: Peptide chain release factor 3 (531 aa).

The 269-residue stretch at 10 to 278 (RRRRTFAIIS…SLIDWAPAPK (269 aa)) folds into the tr-type G domain. Residues 19-26 (SHPDAGKT), 87-91 (DTPGH), and 141-144 (NKYD) contribute to the GTP site.

Belongs to the TRAFAC class translation factor GTPase superfamily. Classic translation factor GTPase family. PrfC subfamily.

It localises to the cytoplasm. In terms of biological role, increases the formation of ribosomal termination complexes and stimulates activities of RF-1 and RF-2. It binds guanine nucleotides and has strong preference for UGA stop codons. It may interact directly with the ribosome. The stimulation of RF-1 and RF-2 is significantly reduced by GTP and GDP, but not by GMP. The sequence is that of Peptide chain release factor 3 from Neisseria meningitidis serogroup B (strain ATCC BAA-335 / MC58).